We begin with the raw amino-acid sequence, 116 residues long: uncharacterized protein (116 aa).

This is an uncharacterized protein from Acidianus filamentous virus 2 (isolate Italy/Pozzuoli) (AFV-2).